Consider the following 404-residue polypeptide: NADH-quinone oxidoreductase subunit D (404 aa).

This sequence belongs to the complex I 49 kDa subunit family. In terms of assembly, NDH-1 is composed of 14 different subunits. Subunits NuoB, C, D, E, F, and G constitute the peripheral sector of the complex.

The protein resides in the cell inner membrane. The catalysed reaction is a quinone + NADH + 5 H(+)(in) = a quinol + NAD(+) + 4 H(+)(out). Its function is as follows. NDH-1 shuttles electrons from NADH, via FMN and iron-sulfur (Fe-S) centers, to quinones in the respiratory chain. The immediate electron acceptor for the enzyme in this species is believed to be ubiquinone. Couples the redox reaction to proton translocation (for every two electrons transferred, four hydrogen ions are translocated across the cytoplasmic membrane), and thus conserves the redox energy in a proton gradient. The chain is NADH-quinone oxidoreductase subunit D from Leptospira borgpetersenii serovar Hardjo-bovis (strain JB197).